A 177-amino-acid polypeptide reads, in one-letter code: MEALILEPSLYTVKAILILDNDGDRLFAKYYDDTYPSVKEQKAFEKNIFNKTHRTDSEIALLEGLTVVYKSSIDLYFYVIGSSYENELMLMAVLNCLFDSLSQMLRKNVEKRALLENMEGLFLAVDEIVDGGVILESDPQQVVHRVALRGEDVPLTEQTVSQVLQSAKEQIKWSLLR.

An N-acetylmethionine modification is found at Met-1.

This sequence belongs to the adaptor complexes small subunit family. In terms of assembly, oligomeric complex that consists of at least the alpha, beta, beta', gamma, delta, epsilon and zeta subunits.

Its subcellular location is the cytoplasm. The protein localises to the golgi apparatus membrane. It localises to the cytoplasmic vesicle. The protein resides in the COPI-coated vesicle membrane. Its function is as follows. The coatomer is a cytosolic protein complex that binds to dilysine motifs and reversibly associates with Golgi non-clathrin-coated vesicles, which further mediate biosynthetic protein transport from the ER, via the Golgi up to the trans Golgi network. Coatomer complex is required for budding from Golgi membranes, and is essential for the retrograde Golgi-to-ER transport of dilysine-tagged proteins. The zeta subunit may be involved in regulating the coat assembly and, hence, the rate of biosynthetic protein transport due to its association-dissociation properties with the coatomer complex. This Homo sapiens (Human) protein is Coatomer subunit zeta-1 (COPZ1).